The following is a 229-amino-acid chain: Response regulator SaeR (229 aa).

In terms of domain architecture, Response regulatory spans 3-116 (HLLIVDDEKD…ELVLRTNNLL (114 aa)). At D51 the chain carries 4-aspartylphosphate. Positions 128–227 (IEQLEFDGLV…VWGLGYKFER (100 aa)) form a DNA-binding region, ompR/PhoB-type.

In terms of processing, phosphorylated by SaeS.

Its subcellular location is the cytoplasm. Functionally, member of the two-component regulatory system SaeR/SaeS. Probably functions as a transcriptional regulator via a specific DNA-binding domain, recognizing motifs near the promoter sequences of target genes. This Staphylococcus epidermidis (strain ATCC 35984 / DSM 28319 / BCRC 17069 / CCUG 31568 / BM 3577 / RP62A) protein is Response regulator SaeR (saeR).